A 1574-amino-acid chain; its full sequence is DNA-directed RNA polymerase subunit beta' (1574 aa).

Zn(2+)-binding residues include cysteine 64, cysteine 66, cysteine 79, and cysteine 82. Mg(2+)-binding residues include aspartate 590, aspartate 592, and aspartate 594. Zn(2+)-binding residues include cysteine 928, cysteine 1002, cysteine 1009, and cysteine 1012.

It belongs to the RNA polymerase beta' chain family. As to quaternary structure, the RNAP catalytic core consists of 2 alpha, 1 beta, 1 beta' and 1 omega subunit. When a sigma factor is associated with the core the holoenzyme is formed, which can initiate transcription. Mg(2+) serves as cofactor. Zn(2+) is required as a cofactor.

It carries out the reaction RNA(n) + a ribonucleoside 5'-triphosphate = RNA(n+1) + diphosphate. In terms of biological role, DNA-dependent RNA polymerase catalyzes the transcription of DNA into RNA using the four ribonucleoside triphosphates as substrates. The polypeptide is DNA-directed RNA polymerase subunit beta' (Aquifex aeolicus (strain VF5)).